A 682-amino-acid polypeptide reads, in one-letter code: TPR repeat-containing thioredoxin TTL4 (682 aa).

Disordered regions lie at residues 1–120 (MSHY…GTPL) and 132–157 (NNNN…TGNI). The residue at position 8 (serine 8) is a Phosphoserine. The span at 16–39 (KFRDSLSFQRDDDVINKPDFRELD) shows a compositional bias: basic and acidic residues. At serine 42 the chain carries Phosphoserine. Over residues 48–71 (GSSSAAATPAASGSSSSSSGSASG) the composition is skewed to low complexity. TPR repeat units lie at residues 211-244 (SEEV…SPEN), 246-278 (AYRS…DPSY), 280-312 (RAHQ…PDQA), 402-435 (AYVL…DHSN), 449-482 (VAKA…DAFN), 483-516 (SVLY…QPSY), and 518-550 (KALL…LPGD). The 88-residue stretch at 587–674 (DKFKTATSLP…MVCPSHQLLE (88 aa)) folds into the Thioredoxin domain.

As to expression, widely expressed.

In terms of biological role, involved in osmotic and salt stress tolerance. May play a role in the control of meristematic cell size during osmotic stress. The protein is TPR repeat-containing thioredoxin TTL4 (TTL4) of Arabidopsis thaliana (Mouse-ear cress).